Reading from the N-terminus, the 186-residue chain is UPF0200 protein PH1008 (186 aa).

Gly7–Gly14 serves as a coordination point for ATP.

It belongs to the UPF0200 family.

This Pyrococcus horikoshii (strain ATCC 700860 / DSM 12428 / JCM 9974 / NBRC 100139 / OT-3) protein is UPF0200 protein PH1008.